The primary structure comprises 152 residues: Antiholin-like protein LrgA (152 aa).

4 helical membrane-spanning segments follow: residues 23-43, 45-65, 77-97, and 108-128; these read YSIFQQALTIAVILLISKIIE, FMPIPMPASVIGLVLLFIALC, VGTALTNNIGFLFVPAGISVI, and ILIILLIIISTLLLLICTGFA.

Belongs to the CidA/LrgA family. LrgA subfamily.

It is found in the cell membrane. In terms of biological role, inhibits the expression or activity of extracellular murein hydrolases by interacting, possibly with LrgB, with the holin-like proteins CidA and/or CidB. The LrgAB and CidAB proteins may affect the proton motive force of the membrane. May be involved in programmed cell death (PCD), possibly triggering PCD in response to antibiotics and environmental stresses. This Staphylococcus epidermidis (strain ATCC 35984 / DSM 28319 / BCRC 17069 / CCUG 31568 / BM 3577 / RP62A) protein is Antiholin-like protein LrgA.